Reading from the N-terminus, the 365-residue chain is Outer capsid protein sigma-3 (365 aa).

The segment at 51-73 (CMHCLGVVGSLQRKLKHLPHHRC) adopts a CCHC-type zinc-finger fold.

The protein belongs to the orthoreovirus sigma-3 protein family. Heterohexamer of three sigma-3 and three Mu-1 proteins. The RNA-binding form is probably a homodimer. Post-translationally, cleaved during virus the endosomal proteolytic disassembly of the outer capsid.

The protein resides in the virion. It localises to the host cytoplasm. The protein localises to the host nucleus. Functionally, stimulates translation by blocking the activation of the dsRNA-dependent protein kinase EIF2AK2/PKR, thereby inhibiting the host interferon response. Sigma3 prevents the activation of EIF2AK2 by competing with the kinase for dsRNA-binding. Its function is as follows. The viral outer shell polypeptides, of which sigma-3 is one, impose structural constraints that prevent elongation of nascent transcripts by the RNA-dependent RNA polymerase lambda-3. The chain is Outer capsid protein sigma-3 (S4) from Reovirus type 3 (strain Dearing) (T3D).